The sequence spans 249 residues: Acetylglutamate kinase (249 aa).

Substrate is bound by residues 36 to 37, arginine 58, and asparagine 147; that span reads GG.

It belongs to the acetylglutamate kinase family. ArgB subfamily.

The protein resides in the cytoplasm. It catalyses the reaction N-acetyl-L-glutamate + ATP = N-acetyl-L-glutamyl 5-phosphate + ADP. It functions in the pathway amino-acid biosynthesis; L-arginine biosynthesis; N(2)-acetyl-L-ornithine from L-glutamate: step 2/4. Functionally, catalyzes the ATP-dependent phosphorylation of N-acetyl-L-glutamate. This is Acetylglutamate kinase from Thermus thermophilus (strain ATCC 27634 / DSM 579 / HB8).